We begin with the raw amino-acid sequence, 192 residues long: Adenylate kinase (192 aa).

Gly12 to Thr17 contacts ATP. The segment at Ser34–Val63 is NMP. Residues Thr35, Arg40, Asn61–Val63, Gly88–Arg91, and Gln95 each bind AMP. Residues Gly130–Asp136 are LID. ATP is bound at residue Arg131. Residues Arg133 and Arg145 each coordinate AMP. An ATP-binding site is contributed by Arg173.

It belongs to the adenylate kinase family. Monomer.

The protein localises to the cytoplasm. The catalysed reaction is AMP + ATP = 2 ADP. The protein operates within purine metabolism; AMP biosynthesis via salvage pathway; AMP from ADP: step 1/1. Its function is as follows. Catalyzes the reversible transfer of the terminal phosphate group between ATP and AMP. Plays an important role in cellular energy homeostasis and in adenine nucleotide metabolism. The protein is Adenylate kinase of Campylobacter jejuni (strain RM1221).